We begin with the raw amino-acid sequence, 218 residues long: 3,4-dihydroxy-2-butanone 4-phosphate synthase (218 aa).

D-ribulose 5-phosphate contacts are provided by residues 38 to 39 (RE), D43, 151 to 155 (RRGHT), and E175. E39 provides a ligand contact to Mg(2+). H154 is a binding site for Mg(2+).

It belongs to the DHBP synthase family. As to quaternary structure, homodimer. Requires Mg(2+) as cofactor. It depends on Mn(2+) as a cofactor.

The catalysed reaction is D-ribulose 5-phosphate = (2S)-2-hydroxy-3-oxobutyl phosphate + formate + H(+). Its pathway is cofactor biosynthesis; riboflavin biosynthesis; 2-hydroxy-3-oxobutyl phosphate from D-ribulose 5-phosphate: step 1/1. Catalyzes the conversion of D-ribulose 5-phosphate to formate and 3,4-dihydroxy-2-butanone 4-phosphate. The protein is 3,4-dihydroxy-2-butanone 4-phosphate synthase of Vibrio vulnificus (strain CMCP6).